The primary structure comprises 65 residues: Large ribosomal subunit protein bL35 (65 aa).

The span at 1 to 16 (MPKQKTHRASAKRFKR) shows a compositional bias: basic residues. The interval 1 to 21 (MPKQKTHRASAKRFKRTGSGG) is disordered.

This sequence belongs to the bacterial ribosomal protein bL35 family.

The sequence is that of Large ribosomal subunit protein bL35 from Streptococcus pyogenes serotype M18 (strain MGAS8232).